A 384-amino-acid polypeptide reads, in one-letter code: S-adenosylmethionine synthase (384 aa).

H15 contacts ATP. D17 is a binding site for Mg(2+). E43 contacts K(+). E56 and Q99 together coordinate L-methionine. Positions 99–109 (QSPDINQGVDR) are flexible loop. ATP is bound by residues 164–166 (DAK), 230–231 (RF), D239, 245–246 (RK), A262, and K266. L-methionine is bound at residue D239. Residue K270 participates in L-methionine binding.

This sequence belongs to the AdoMet synthase family. Homotetramer; dimer of dimers. Requires Mg(2+) as cofactor. K(+) is required as a cofactor.

The protein localises to the cytoplasm. It carries out the reaction L-methionine + ATP + H2O = S-adenosyl-L-methionine + phosphate + diphosphate. It functions in the pathway amino-acid biosynthesis; S-adenosyl-L-methionine biosynthesis; S-adenosyl-L-methionine from L-methionine: step 1/1. Functionally, catalyzes the formation of S-adenosylmethionine (AdoMet) from methionine and ATP. The overall synthetic reaction is composed of two sequential steps, AdoMet formation and the subsequent tripolyphosphate hydrolysis which occurs prior to release of AdoMet from the enzyme. This is S-adenosylmethionine synthase from Yersinia pseudotuberculosis serotype IB (strain PB1/+).